The following is a 252-amino-acid chain: tRNA uridine(34) hydroxylase (252 aa).

Positions 129 to 223 constitute a Rhodanese domain; that stretch reads QGRPVVMLDT…YFEETGGKGF (95 aa). Residue cysteine 183 is the Cysteine persulfide intermediate of the active site.

Belongs to the TrhO family.

It catalyses the reaction uridine(34) in tRNA + AH2 + O2 = 5-hydroxyuridine(34) in tRNA + A + H2O. Catalyzes oxygen-dependent 5-hydroxyuridine (ho5U) modification at position 34 in tRNAs. The chain is tRNA uridine(34) hydroxylase from Bordetella petrii (strain ATCC BAA-461 / DSM 12804 / CCUG 43448).